The primary structure comprises 194 residues: Recombination protein RecR (194 aa).

The C4-type zinc finger occupies 52–67 (CTECRTFTEEEVCHIC). One can recognise a Toprim domain in the interval 76 to 171 (GQICVVESPA…EASRIAHGVP (96 aa)).

Belongs to the RecR family.

Its function is as follows. May play a role in DNA repair. It seems to be involved in an RecBC-independent recombinational process of DNA repair. It may act with RecF and RecO. This chain is Recombination protein RecR, found in Vibrio campbellii (strain ATCC BAA-1116).